The following is a 278-amino-acid chain: Small ribosomal subunit protein uS3 (278 aa).

The 69-residue stretch at 39-107 (LRKAISKKYV…KVQLNIVEIS (69 aa)) folds into the KH type-2 domain. The tract at residues 255-278 (AEIPAEEKPKRVVKKAENITKEEE) is disordered.

Belongs to the universal ribosomal protein uS3 family. Part of the 30S ribosomal subunit. Forms a tight complex with proteins S10 and S14.

Binds the lower part of the 30S subunit head. Binds mRNA in the 70S ribosome, positioning it for translation. This Dehalococcoides mccartyi (strain CBDB1) protein is Small ribosomal subunit protein uS3.